A 274-amino-acid polypeptide reads, in one-letter code: 2-dehydro-3-deoxyphosphooctonate aldolase (274 aa).

This sequence belongs to the KdsA family.

Its subcellular location is the cytoplasm. It catalyses the reaction D-arabinose 5-phosphate + phosphoenolpyruvate + H2O = 3-deoxy-alpha-D-manno-2-octulosonate-8-phosphate + phosphate. It participates in carbohydrate biosynthesis; 3-deoxy-D-manno-octulosonate biosynthesis; 3-deoxy-D-manno-octulosonate from D-ribulose 5-phosphate: step 2/3. Its pathway is bacterial outer membrane biogenesis; lipopolysaccharide biosynthesis. This Rickettsia rickettsii (strain Iowa) protein is 2-dehydro-3-deoxyphosphooctonate aldolase.